The chain runs to 983 residues: Poly [ADP-ribose] polymerase 1 (983 aa).

2 consecutive PARP-type zinc fingers follow at residues 8-91 (WRAE…ESGA) and 114-194 (YGIE…KKAL). Zn(2+) contacts are provided by Cys20, Cys23, His52, Cys55, Cys126, Cys129, His156, and Cys159. The interval 197–246 (AKTETAEARQTNSRAGTKRKNDSVDNEKSKLAKSSFDMSTSGALQPCSKE) is disordered. Basic and acidic residues predominate over residues 215–226 (RKNDSVDNEKSK). Positions 236 to 375 (TSGALQPCSK…SVKPKRILRP (140 aa)) constitute a PADR1 zinc-binding domain. Positions 301–345 (GPLALCPMCSGHLSFSGGLYRCHGYISEWSKCSHSTLDPDRIKGK) are zinc ribbon. 4 residues coordinate Zn(2+): Cys306, Cys309, Cys322, and Cys332. The segment at 369-397 (PKRILRPVLSGETSQGQGSKDATDSSRSE) is disordered. Residues 379 to 388 (GETSQGQGSK) are compositionally biased toward polar residues. Positions 394–484 (SRSERLADLK…RKLPFDKYKI (91 aa)) constitute a BRCT domain. A WGR domain is found at 511–611 (HCHILEDGNS…TNFQKQPGKF (101 aa)). The region spanning 633–751 (SSNLAPSLIE…DIEIASRIVG (119 aa)) is the PARP alpha-helical domain. A PARP catalytic domain is found at 758–983 (ESLDDKYKKL…LLKVRFKHKR (226 aa)).

The protein belongs to the ARTD/PARP family.

Its subcellular location is the nucleus. It catalyses the reaction NAD(+) + (ADP-D-ribosyl)n-acceptor = nicotinamide + (ADP-D-ribosyl)n+1-acceptor + H(+).. The enzyme catalyses L-aspartyl-[protein] + NAD(+) = 4-O-(ADP-D-ribosyl)-L-aspartyl-[protein] + nicotinamide. The catalysed reaction is L-glutamyl-[protein] + NAD(+) = 5-O-(ADP-D-ribosyl)-L-glutamyl-[protein] + nicotinamide. Involved in the base excision repair (BER) pathway, by catalyzing the poly(ADP-ribosyl)ation of a limited number of acceptor proteins involved in chromatin architecture and in DNA metabolism. This modification follows DNA damages and appears as an obligatory step in a detection/signaling pathway leading to the reparation of DNA strand breaks. In Arabidopsis thaliana (Mouse-ear cress), this protein is Poly [ADP-ribose] polymerase 1 (PARP1).